The primary structure comprises 204 residues: Viral interleukin-6 homolog (204 aa).

Residues 1-22 (MRWFKLWSILLVGSLLVSGTRG) form the signal peptide.

The protein belongs to the IL-6 superfamily. As to quaternary structure, interacts with host IL6ST.

Initiates signal transduction through binding to interleukin-6 receptor subunit beta IL6ST, independently of the cognate IL6 receptor IL6R. In infected primary effusion lymphoma cells, promotes proliferation of cells, protects them from apoptosis, and promotes immune evasion of interferon activity. Also drives blood to lymphatic endothelial cell differentiation. The polypeptide is Viral interleukin-6 homolog (K2) (Homo sapiens (Human)).